The following is a 312-amino-acid chain: Zinc finger CCCH domain-containing protein 25 (312 aa).

Residues 36–114 (AYVFVGGIPY…RIVRVDHVSK (79 aa)) form the RRM domain. Residues 130 to 157 (REARGVCYAFQKGECNRGASCRYSHDEQ) form a C3H1-type zinc finger. The interval 153–312 (SHDEQRNANT…DSERYRKSRR (160 aa)) is disordered. 3 stretches are compositionally biased toward basic and acidic residues: residues 166-184 (SKEE…EPPM), 197-210 (RFPD…KSTG), and 219-312 (EAYK…KSRR).

This Oryza sativa subsp. japonica (Rice) protein is Zinc finger CCCH domain-containing protein 25.